Reading from the N-terminus, the 179-residue chain is ECF RNA polymerase sigma factor SigF (179 aa).

The tract at residues 33–93 (RLRAYFMRRM…KLIDHWRRRK (61 aa)) is sigma-70 factor domain-2. The Polymerase core binding motif lies at 51 to 64 (DLVQETLLAVHLKR). The segment at 123–170 (ALASLPQRQRMLVSDVKLTGLSLAEAGARAGISEGAAKVALHRALKAL) is sigma-70 factor domain-4. Residues 145-164 (LAEAGARAGISEGAAKVALH) constitute a DNA-binding region (H-T-H motif).

This sequence belongs to the sigma-70 factor family. ECF subfamily.

Its subcellular location is the cytoplasm. Sigma factors are initiation factors that promote the attachment of RNA polymerase to specific initiation sites and are then released. Extracytoplasmic function (ECF) sigma factors are held in an inactive form by a cognate anti-sigma factor (NrsF in this case) until they are released. Up-regulates expression of 4 operons (sigF-nrsF, CCNA_02834, CCNA_03001 to CCNA_02999 and CCNA_03363 to CCNA_03366) in response to potassium dichromate (K(2)Cr(2)O(7)) or cadmium chloride (CdCl(2)). Overexpression of sigF leads to higher expression of its regulon. The protein is ECF RNA polymerase sigma factor SigF of Caulobacter vibrioides (strain NA1000 / CB15N) (Caulobacter crescentus).